The sequence spans 231 residues: Small ribosomal subunit protein uS3 (231 aa).

The KH type-2 domain occupies 38–106 (IRVYLKNRLK…KTFVNIMEIK (69 aa)).

It belongs to the universal ribosomal protein uS3 family. As to quaternary structure, part of the 30S ribosomal subunit. Forms a tight complex with proteins S10 and S14.

Functionally, binds the lower part of the 30S subunit head. Binds mRNA in the 70S ribosome, positioning it for translation. This Endomicrobium trichonymphae protein is Small ribosomal subunit protein uS3.